The following is a 457-amino-acid chain: NADH-quinone oxidoreductase subunit N (457 aa).

The next 14 helical transmembrane spans lie at 2-22, 25-45, 60-80, 92-112, 114-134, 149-169, 188-208, 222-242, 253-273, 283-303, 310-330, 353-373, 382-402, and 431-451; these read NAIILISVLGILSMMSEFIGL, LIYPIILISLIGILGYNACTF, NYSVAFGSLLITITLFWFILF, GDHYALILFSTVGGLVLVSFS, MSMLFLGVEILSIPLYILAGS, FILGSFATGIMLLGIALIYGA, FFIGITLLSIAFAFKVSAVPF, FITAFMSTFVKVAAFGAFYLM, YLSHTLIGLSALTIVVGNIAA, LAFSGVSQAGYMLMVFPILTI, FVYLAGYAIANLIAIYIVQVV, AFVLSLSLISLAGIPPAAGFF, VIHAGNIYLVLIAILGSLISV, and VILAIMSALVVLIGLFPDILL.

This sequence belongs to the complex I subunit 2 family. As to quaternary structure, NDH-1 is composed of 14 different subunits. Subunits NuoA, H, J, K, L, M, N constitute the membrane sector of the complex.

The protein resides in the cell inner membrane. It carries out the reaction a quinone + NADH + 5 H(+)(in) = a quinol + NAD(+) + 4 H(+)(out). In terms of biological role, NDH-1 shuttles electrons from NADH, via FMN and iron-sulfur (Fe-S) centers, to quinones in the respiratory chain. The immediate electron acceptor for the enzyme in this species is believed to be a menaquinone. Couples the redox reaction to proton translocation (for every two electrons transferred, four hydrogen ions are translocated across the cytoplasmic membrane), and thus conserves the redox energy in a proton gradient. This is NADH-quinone oxidoreductase subunit N from Cytophaga hutchinsonii (strain ATCC 33406 / DSM 1761 / CIP 103989 / NBRC 15051 / NCIMB 9469 / D465).